The primary structure comprises 420 residues: Histidine--tRNA ligase (420 aa).

This sequence belongs to the class-II aminoacyl-tRNA synthetase family. In terms of assembly, homodimer.

It is found in the cytoplasm. It catalyses the reaction tRNA(His) + L-histidine + ATP = L-histidyl-tRNA(His) + AMP + diphosphate + H(+). This is Histidine--tRNA ligase from Thermodesulfovibrio yellowstonii (strain ATCC 51303 / DSM 11347 / YP87).